The primary structure comprises 103 residues: Phosphoribosyl-ATP pyrophosphatase (103 aa).

It belongs to the PRA-PH family.

The protein resides in the cytoplasm. The catalysed reaction is 1-(5-phospho-beta-D-ribosyl)-ATP + H2O = 1-(5-phospho-beta-D-ribosyl)-5'-AMP + diphosphate + H(+). Its pathway is amino-acid biosynthesis; L-histidine biosynthesis; L-histidine from 5-phospho-alpha-D-ribose 1-diphosphate: step 2/9. In Listeria monocytogenes serotype 4b (strain CLIP80459), this protein is Phosphoribosyl-ATP pyrophosphatase.